Here is a 378-residue protein sequence, read N- to C-terminus: Queuine tRNA-ribosyltransferase (378 aa).

The active-site Proton acceptor is Asp91. Residues 91 to 95, Asp145, Gln189, and Gly216 contribute to the substrate site; that span reads DSGGF. The RNA binding stretch occupies residues 247–253; it reads GVGKPED. Asp266 serves as the catalytic Nucleophile. An RNA binding; important for wobble base 34 recognition region spans residues 271-275; it reads TRNAR. Residues Cys304, Cys306, Cys309, and His335 each contribute to the Zn(2+) site.

This sequence belongs to the queuine tRNA-ribosyltransferase family. Homodimer. Within each dimer, one monomer is responsible for RNA recognition and catalysis, while the other monomer binds to the replacement base PreQ1. Requires Zn(2+) as cofactor.

The enzyme catalyses 7-aminomethyl-7-carbaguanine + guanosine(34) in tRNA = 7-aminomethyl-7-carbaguanosine(34) in tRNA + guanine. It functions in the pathway tRNA modification; tRNA-queuosine biosynthesis. Functionally, catalyzes the base-exchange of a guanine (G) residue with the queuine precursor 7-aminomethyl-7-deazaguanine (PreQ1) at position 34 (anticodon wobble position) in tRNAs with GU(N) anticodons (tRNA-Asp, -Asn, -His and -Tyr). Catalysis occurs through a double-displacement mechanism. The nucleophile active site attacks the C1' of nucleotide 34 to detach the guanine base from the RNA, forming a covalent enzyme-RNA intermediate. The proton acceptor active site deprotonates the incoming PreQ1, allowing a nucleophilic attack on the C1' of the ribose to form the product. After dissociation, two additional enzymatic reactions on the tRNA convert PreQ1 to queuine (Q), resulting in the hypermodified nucleoside queuosine (7-(((4,5-cis-dihydroxy-2-cyclopenten-1-yl)amino)methyl)-7-deazaguanosine). In Vibrio campbellii (strain ATCC BAA-1116), this protein is Queuine tRNA-ribosyltransferase.